A 148-amino-acid polypeptide reads, in one-letter code: Small ribosomal subunit protein eS19 (148 aa).

A compositionally biased stretch (basic residues) spans 79–90 (HGSTKNRGSRPA). Disordered stretches follow at residues 79–98 (HGST…ASGA) and 116–148 (DEEK…EDDE). Basic and acidic residues predominate over residues 130–140 (RDLDRIAKTTV).

The protein belongs to the eukaryotic ribosomal protein eS19 family.

The protein is Small ribosomal subunit protein eS19 (rps19) of Emericella nidulans (strain FGSC A4 / ATCC 38163 / CBS 112.46 / NRRL 194 / M139) (Aspergillus nidulans).